We begin with the raw amino-acid sequence, 1499 residues long: Pleiotropic ABC efflux transporter of multiple drugs CDR1 (1499 aa).

The span at 1–11 (MSLASDKKDAD) shows a compositional bias: basic and acidic residues. A disordered region spans residues 1 to 29 (MSLASDKKDADVASTTTTAQDDDNLSTYH). N-linked (GlcNAc...) asparagine glycans are attached at residues N24, N96, and N99. The ABC transporter 1 domain occupies 146–399 (VYNTVVPSTA…FQKMGYVSPE (254 aa)). The residue at position 307 (S307) is a Phosphoserine. An N-linked (GlcNAc...) asparagine glycan is attached at N323. A Phosphoserine modification is found at S484. A helical membrane pass occupies residues 510–530 (GVTLFMVIGNSSMAFILGSMF). Residue N537 is glycosylated (N-linked (GlcNAc...) asparagine). 5 helical membrane passes run 548–568 (AMFF…FSLF), 597–617 (VPAK…LVNF), 622–642 (GVFF…SHLF), 654–674 (AAMV…GFAI), and 763–783 (GFGI…ILCE). N-linked (GlcNAc...) asparagine glycosylation occurs at N813. The 243-residue stretch at 857–1099 (FHWRNLCYDV…TMIDYFESHG (243 aa)) folds into the ABC transporter 2 domain. Residue 893–900 (GASGAGKT) coordinates ATP. N1159 is a glycosylation site (N-linked (GlcNAc...) asparagine). 3 consecutive transmembrane segments (helical) span residues 1193–1213 (YLWS…FTFF), 1228–1248 (AVFM…PSFV), and 1278–1298 (IPWN…AIGF). N-linked (GlcNAc...) asparagine glycosylation occurs at N1301. Helical transmembrane passes span 1314 to 1334 (LFWL…LFCI) and 1342 to 1362 (AAAN…GVLV). A glycan (N-linked (GlcNAc...) asparagine) is linked at N1412. A helical membrane pass occupies residues 1466–1486 (WGIFICYIAFNYIAGIFLYWL).

The protein belongs to the ABC transporter superfamily. In terms of processing, phosphorylated at Ser-307 and Ser-484. Ser-307 and Ser-484 are dephosphorylated on glucose depletion and independently rephosphorylated during glucose exposure or under stress.

It localises to the cell membrane. With respect to regulation, inhibited by clorgyline. Inhibited by RC21v3, a 4-methoxy-2,3,6-trimethylbenzenesulphonyl derivative of the D-octapeptide D-FFKWQRRR, via the interaction with the ectodomain. FK506, enniatin, milbemycin alpha-11, and milbemycin beta-9 also inhibit CDR1 activity. Inhibited by milbemycin A3/A4 oxim derivatives. Its function is as follows. Pleiotropic ABC efflux transporter that transports and confers resistance to structurally and functionally unrelated compounds including rhodamine 6G, Nile red, caspofungin, cycloheximide, or azoles such as fluconazole, itraconazole, ketoconazole, posaconazole, voriconazole, and isavuconazole. Chlorbromuron, itraconazole, yohimbine, ketoconazole, miconazole, clotrimazole, DE-11, tamoxifen, quinidine, verapamil can compete for rhodamine 6G's binding site(s) while compounds such as propanil, chloramphenicol, benomyl, voriconazole, tritylimidazole, ketoconazole, miconazole, tamoxifen, gefitinib shared binding site(s) with fluconazole. Nile red mediated efflux appears to be relatively more specific since only five compounds such as ZW3-12, rhodamine 123, miconazole, clotrimazole, and itraconazole can inhibit its accumulation. Does not use as substrates 4-nitroquinoline 1-oxide (4-NQO) and disulfiram. Does not play a role in the azole resistance in mature biofilms. The sequence is that of Pleiotropic ABC efflux transporter of multiple drugs CDR1 from Candida glabrata (strain ATCC 2001 / BCRC 20586 / JCM 3761 / NBRC 0622 / NRRL Y-65 / CBS 138) (Yeast).